Reading from the N-terminus, the 585-residue chain is A-type ATP synthase subunit A (585 aa).

231 to 238 (GPFGSGKT) contacts ATP.

This sequence belongs to the ATPase alpha/beta chains family. As to quaternary structure, has multiple subunits with at least A(3), B(3), C, D, E, F, H, I and proteolipid K(x).

The protein resides in the cell membrane. The enzyme catalyses ATP + H2O + 4 H(+)(in) = ADP + phosphate + 5 H(+)(out). In terms of biological role, component of the A-type ATP synthase that produces ATP from ADP in the presence of a proton gradient across the membrane. The A chain is the catalytic subunit. The protein is A-type ATP synthase subunit A of Thermococcus sibiricus (strain DSM 12597 / MM 739).